Consider the following 217-residue polypeptide: Aprataxin-like protein (217 aa).

In terms of domain architecture, HIT spans 6–139 (ALKNYVTSPE…HIHVISKDFH (134 aa)). Interaction with DNA stretches follow at residues 34–38 (DSFPK), 121–132 (HSVPSMANLHIH), and 144–148 (KNKKH). Histidine 130 functions as the Nucleophile in the catalytic mechanism. 4 residues coordinate Zn(2+): cysteine 188, cysteine 191, histidine 205, and glutamate 209.

Its subcellular location is the nucleus. The protein localises to the cytoplasm. It catalyses the reaction a 5'-end adenosine-5'-diphospho-5'-2'-deoxyribonucleoside-DNA + H2O = a 5'-end 5'-phospho-2'-deoxyribonucleoside-DNA + AMP + 2 H(+). It carries out the reaction a 5'-end adenosine-5'-diphospho-5'-ribonucleoside-2'-deoxyribonucleotide-DNA + H2O = a 5'-end 5'-phospho-ribonucleoside-2'-deoxyribonucleotide-DNA + AMP + 2 H(+). The catalysed reaction is a 3'-end 2'-deoxyribonucleotide-3'-diphospho-5'-guanosine-DNA + H2O = a 3'-end 2'-deoxyribonucleotide 3'-phosphate-DNA + GMP + 2 H(+). Functionally, DNA-binding protein involved in single-strand DNA break repair, double-strand DNA break repair and base excision repair. Resolves abortive DNA ligation intermediates formed either at base excision sites, or when DNA ligases attempt to repair non-ligatable breaks induced by reactive oxygen species. Catalyzes the release of adenylate groups covalently linked to 5'-phosphate termini, resulting in the production of 5'-phosphate termini that can be efficiently rejoined. Likewise, catalyzes the release of 3'-linked guanosine (DNAppG) and inosine (DNAppI) from DNA, but has higher specific activity with 5'-linked adenosine (AppDNA). This Saccharomyces cerevisiae (strain ATCC 204508 / S288c) (Baker's yeast) protein is Aprataxin-like protein (HNT3).